The following is a 230-amino-acid chain: 6-carboxyhexanoate--CoA ligase (230 aa).

It belongs to the BioW family. In terms of assembly, homodimer. Mg(2+) is required as a cofactor.

It carries out the reaction heptanedioate + ATP + CoA = 6-carboxyhexanoyl-CoA + AMP + diphosphate. It functions in the pathway metabolic intermediate metabolism; pimeloyl-CoA biosynthesis; pimeloyl-CoA from pimelate: step 1/1. In terms of biological role, catalyzes the transformation of pimelate into pimeloyl-CoA with concomitant hydrolysis of ATP to AMP. The protein is 6-carboxyhexanoate--CoA ligase of Staphylococcus aureus (strain MRSA252).